The following is a 777-amino-acid chain: Aminopeptidase P (777 aa).

Residues 1–17 (MQLNFLLFVFIFLMVFH) form the signal peptide. Residue H551 participates in substrate binding. Residues D570 and D581 each coordinate Mn(2+). H640 provides a ligand contact to substrate. H644 serves as a coordination point for Mn(2+). H653 is a binding site for substrate. E676 and E690 together coordinate Mn(2+).

Belongs to the peptidase M24B family. Homodimer. It depends on Mn(2+) as a cofactor. Post-translationally, the N-terminus may be proteolytically cleaved to generate a 73-kDa mature form.

The protein localises to the vacuole lumen. The protein resides in the cytoplasm. It catalyses the reaction Release of any N-terminal amino acid, including proline, that is linked to proline, even from a dipeptide or tripeptide.. With respect to regulation, partially activated by Co(2+) and Mg(2+) has no effect. Inhibited by 1 mM Zn(2+), Ni(2+), or Cu(2+). Inhibited by apstatin, a non-hydrolysable peptide analog. Its function is as follows. Catalyzes the removal of a penultimate prolyl residue from the N-termini of peptides. In the food vacuole, involved in the final step of host hemoglobin catabolism, by cleaving hemoglobin-derived oligopeptides. In the cytoplasm, may be involved in the last steps of the turnover of ubiquitinated proteins. This is Aminopeptidase P from Plasmodium falciparum (isolate 3D7).